Consider the following 229-residue polypeptide: Probable methylthioribulose-1-phosphate dehydratase (229 aa).

Substrate is bound at residue C97. Residues H115 and H117 each contribute to the Zn(2+) site. E139 serves as the catalytic Proton donor/acceptor. Residue H195 participates in Zn(2+) binding.

It belongs to the aldolase class II family. MtnB subfamily. Zn(2+) is required as a cofactor.

It is found in the cytoplasm. It catalyses the reaction 5-(methylsulfanyl)-D-ribulose 1-phosphate = 5-methylsulfanyl-2,3-dioxopentyl phosphate + H2O. Its pathway is amino-acid biosynthesis; L-methionine biosynthesis via salvage pathway; L-methionine from S-methyl-5-thio-alpha-D-ribose 1-phosphate: step 2/6. Its function is as follows. Catalyzes the dehydration of methylthioribulose-1-phosphate (MTRu-1-P) into 2,3-diketo-5-methylthiopentyl-1-phosphate (DK-MTP-1-P). In Acyrthosiphon pisum (Pea aphid), this protein is Probable methylthioribulose-1-phosphate dehydratase.